The primary structure comprises 277 residues: Energy-coupling factor transporter ATP-binding protein EcfA1 (277 aa).

The region spanning Leu5–Asp240 is the ABC transporter domain. Gly40–Ser47 lines the ATP pocket. The Proton acceptor role is filled by Glu166.

It belongs to the ABC transporter superfamily. Energy-coupling factor EcfA family. As to quaternary structure, forms a stable energy-coupling factor (ECF) transporter complex composed of 2 membrane-embedded substrate-binding proteins (S component), 2 ATP-binding proteins (A component) and 2 transmembrane proteins (T component). In L.lactis forms a stable complex with EcfA' and EcfT and substrate-binding components. In E.coli forms a stable complex with EcfA', EcfT and individually with 3 tested substrate-binding components (BioY, NiaX and ThiT) with a stoichiometry of 1.1:1:1. The core ECF complex interacts with a number of substrate-specific binding components, including BioY, BioY2, HmpT, NiaX, PanT, QueT, RibU and ThiT.

It localises to the cell membrane. In terms of biological role, ATP-binding (A) component of a common energy-coupling factor (ECF) ABC-transporter complex. Unlike classic ABC transporters this ECF transporter provides the energy necessary to transport a number of different substrates. In this organism these probably include biotin, thiamine precursor, niacin, pantothenic acid, queuosine precursor, riboflavin and thiamine. Uptake of niacin or riboflavin into proteosomes containing EcfA1A2T and Niax or RibU has been demonstrated. Uptake requires hydrolyzable Mg-ATP and is substrate-specific; NiaX-containing proteosomes did not transport riboflavin. The polypeptide is Energy-coupling factor transporter ATP-binding protein EcfA1 (Lactococcus lactis subsp. cremoris (strain MG1363)).